The following is a 787-amino-acid chain: Disintegrin and metalloproteinase domain-containing protein 32 (787 aa).

A signal peptide spans 1–16 (MFRLWLLLAGLCGLLA). Ser17 carries the post-translational modification Phosphoserine. The propeptide occupies 17-174 (SRPGFQNSLL…PMDDNIFISE (158 aa)). N-linked (GlcNAc...) asparagine glycans are attached at residues Asn39 and Asn125. Residues 175–682 (KSEPAVPDLF…ERASGKTENT (508 aa)) are Extracellular-facing. Residues 186–383 (LYLEMHIVVD…VGVKCLQNKP (198 aa)) form the Peptidase M12B domain. Cystine bridges form between Cys295/Cys378, Cys337/Cys362, Cys339/Cys344, and Cys450/Cys471. Residues 391 to 479 (KPVCGNGRLE…ECGPDITLIN (89 aa)) enclose the Disintegrin domain. Asn465 and Asn598 each carry an N-linked (GlcNAc...) asparagine glycan. One can recognise an EGF-like domain in the interval 622-654 (SAHVCSQQCSGHGVCDSRNKCHCSPGYKPPNCQ). 3 disulfides stabilise this stretch: Cys626–Cys636, Cys630–Cys642, and Cys644–Cys653. A helical membrane pass occupies residues 683-703 (WLLGFLIALPILIVTTAIVLA). The Cytoplasmic portion of the chain corresponds to 704-787 (RKQLKKWFAK…DSTQTQSSSN (84 aa)). The disordered stretch occupies residues 715 to 787 (EEFPSSESKS…DSTQTQSSSN (73 aa)). The segment covering 728 to 749 (TQTYASQSSSEGSTQTYASQTR) has biased composition (polar residues). Residues 771 to 787 (TSRSKSQDSTQTQSSSN) show a composition bias toward low complexity.

As to expression, testis specific.

It localises to the membrane. Its function is as follows. May play a role in sperm development and fertilization This is a non-catalytic metalloprotease-like protein. The protein is Disintegrin and metalloproteinase domain-containing protein 32 (ADAM32) of Homo sapiens (Human).